The sequence spans 731 residues: Bifunctional trehalose-6-phosphate synthase/phosphatase (731 aa).

Positions 1–464 (MRLIVVSNRL…WGTDFIYSLI (464 aa)) are alpha,alpha-trehalose-phosphate synthase. R9 lines the D-glucose 6-phosphate pocket. Residue 25–26 (GG) participates in UDP-alpha-D-glucose binding. D-glucose 6-phosphate-binding residues include Y89 and D143. Residues R276 and K281 each contribute to the UDP-alpha-D-glucose site. R314 provides a ligand contact to D-glucose 6-phosphate. 379-383 (LVAKE) lines the UDP-alpha-D-glucose pocket. The trehalose-6-phosphate phosphatase stretch occupies residues 465–731 (SAKSAREEVE…RSLLEQLRPP (267 aa)). The active-site Nucleophile is the D503. Residues D503, D505, and D684 each contribute to the Mg(2+) site. 503–505 (DYD) is an alpha,alpha-trehalose 6-phosphate binding site.

This sequence in the N-terminal section; belongs to the glycosyltransferase 20 family. The protein in the C-terminal section; belongs to the trehalose phosphatase family. In terms of assembly, may interact with the putative glycosyltransferase (GT) TTX_1305. TTX_1305 is required for the trehalose-6-phosphate synthase activity of tpsp. Requires Mg(2+) as cofactor.

The enzyme catalyses D-glucose 6-phosphate + UDP-alpha-D-glucose = alpha,alpha-trehalose 6-phosphate + UDP + H(+). It catalyses the reaction alpha,alpha-trehalose 6-phosphate + H2O = alpha,alpha-trehalose + phosphate. It functions in the pathway glycan biosynthesis; trehalose biosynthesis. Functionally, bifunctional enzyme which catalyzes the transfer of glucose from UDP-alpha-D-glucose to glucose-6-phosphate to form trehalose-6-phosphate (Tre6P) and removes the phosphate from Tre6P to produce free trehalose. The polypeptide is Bifunctional trehalose-6-phosphate synthase/phosphatase (Thermoproteus tenax (strain ATCC 35583 / DSM 2078 / JCM 9277 / NBRC 100435 / Kra 1)).